Here is a 673-residue protein sequence, read N- to C-terminus: DNA ligase (673 aa).

NAD(+) is bound by residues 33–37 (DYEYD), 82–83 (SL), and Glu-113. Lys-115 acts as the N6-AMP-lysine intermediate in catalysis. The NAD(+) site is built by Arg-136, Glu-170, Lys-285, and Lys-309. Residues Cys-403, Cys-406, Cys-421, and Cys-426 each coordinate Zn(2+). One can recognise a BRCT domain in the interval 583-672 (AKSDILKGYT…SREEAEKILM (90 aa)).

The protein belongs to the NAD-dependent DNA ligase family. LigA subfamily. Mg(2+) serves as cofactor. It depends on Mn(2+) as a cofactor.

The enzyme catalyses NAD(+) + (deoxyribonucleotide)n-3'-hydroxyl + 5'-phospho-(deoxyribonucleotide)m = (deoxyribonucleotide)n+m + AMP + beta-nicotinamide D-nucleotide.. Functionally, DNA ligase that catalyzes the formation of phosphodiester linkages between 5'-phosphoryl and 3'-hydroxyl groups in double-stranded DNA using NAD as a coenzyme and as the energy source for the reaction. It is essential for DNA replication and repair of damaged DNA. The protein is DNA ligase of Caldicellulosiruptor bescii (strain ATCC BAA-1888 / DSM 6725 / KCTC 15123 / Z-1320) (Anaerocellum thermophilum).